The following is a 456-amino-acid chain: Chordin-like protein 1 (456 aa).

Positions 1-28 (MRRKWRSEDFHFVFFGVLCLLLIDRGKL) are cleaved as a signal peptide. 3 consecutive VWFC domains span residues 36-101 (TYCV…PRCP), 115-181 (KSCE…PVCR), and 262-327 (RVCV…KVCP). Residue N120 is glycosylated (N-linked (GlcNAc...) asparagine). A Cell attachment site motif is present at residues 181–183 (RGD). Residue N295 is glycosylated (N-linked (GlcNAc...) asparagine).

As to expression, mainly expressed in the ventral retina.

Its subcellular location is the secreted. Its function is as follows. Seems to antagonize the function of BMP4 by binding to it and preventing its interaction with receptors. This Gallus gallus (Chicken) protein is Chordin-like protein 1 (CHRDL1).